We begin with the raw amino-acid sequence, 153 residues long: uncharacterized protein (153 aa).

The N-terminal stretch at 1–22 is a signal peptide; that stretch reads MKMLKKGTAVLFVMIMAVMLVA. Cys-23 carries the N-palmitoyl cysteine lipid modification. Cys-23 carries the S-diacylglycerol cysteine lipid modification. The disordered stretch occupies residues 117–153; it reads DMNKIPGMSSNGDTSKGISMEESAKMLESQGYKEVSK. Over residues 124–133 the composition is skewed to polar residues; sequence MSSNGDTSKG.

This sequence to E.coli YehR.

It localises to the cell membrane. This is an uncharacterized protein from Listeria monocytogenes serovar 1/2a (strain ATCC BAA-679 / EGD-e).